We begin with the raw amino-acid sequence, 226 residues long: V-type proton ATPase subunit E (226 aa).

Belongs to the V-ATPase E subunit family. In terms of assembly, V-ATPase is a heteromultimeric enzyme composed of a peripheral catalytic V1 complex (components A to H) attached to an integral membrane V0 proton pore complex (components: a, c, c', c'' and d).

In terms of biological role, subunit of the peripheral V1 complex of vacuolar ATPase essential for assembly or catalytic function. V-ATPase is responsible for acidifying a variety of intracellular compartments in eukaryotic cells. This is V-type proton ATPase subunit E (VATE) from Mesembryanthemum crystallinum (Common ice plant).